A 2046-amino-acid chain; its full sequence is Protein TIC 214 (2046 aa).

Transmembrane regions (helical) follow at residues 18–38 (VSGPIILFGLYYGFIATLPFG), 54–74 (LYGIIAISGSITGQLIVFLSM), 79–99 (IYAALWKPHAITLLVIPYTFC), 125–145 (ILSLFMGGLILQLLNPILLAN), 163–183 (ISFMISSFCGWLGGHILFINL), and 214–234 (TFSVLLISYFSFYLGRSPLIF). Disordered regions lie at residues 278–299 (DEDRSVAMAKKGRSVAEDEDRS), 320–472 (ARSV…VPRE), and 1833–1898 (AKDS…EDEI). Basic and acidic residues-rich tracts occupy residues 322–335 (SVAEDKDPEDEHRS), 344–368 (SVAEDKDPEDEHRSVAMAKKDRSVA), and 378–457 (AKKD…RSVA). Residues 1833 to 1866 (AKDSNANDINAKDSNANDINANDSNAKDSNANDI) show a composition bias toward low complexity. Residues 1882–1898 (NAKDSNADVPKKKEDEI) show a composition bias toward basic and acidic residues.

This sequence belongs to the TIC214 family. In terms of assembly, part of the Tic complex.

It localises to the plastid. Its subcellular location is the chloroplast inner membrane. Its function is as follows. Involved in protein precursor import into chloroplasts. May be part of an intermediate translocation complex acting as a protein-conducting channel at the inner envelope. This chain is Protein TIC 214, found in Pinus koraiensis (Korean pine).